The chain runs to 104 residues: DNA-directed RNA polymerase subunit omega (104 aa).

Residues 76–104 (IEEEKRRKEEEEKKIKEQIAKEKEDGEKI) are disordered.

It belongs to the RNA polymerase subunit omega family. In terms of assembly, the RNAP catalytic core consists of 2 alpha, 1 beta, 1 beta' and 1 omega subunit. When a sigma factor is associated with the core the holoenzyme is formed, which can initiate transcription.

The catalysed reaction is RNA(n) + a ribonucleoside 5'-triphosphate = RNA(n+1) + diphosphate. Its function is as follows. Promotes RNA polymerase assembly. Latches the N- and C-terminal regions of the beta' subunit thereby facilitating its interaction with the beta and alpha subunits. The polypeptide is DNA-directed RNA polymerase subunit omega (Streptococcus pneumoniae (strain CGSP14)).